A 99-amino-acid chain; its full sequence is uncharacterized protein (99 aa).

The N-terminal stretch at 1 to 19 is a signal peptide; the sequence is MLGMIRWVVEGTLVAMLLS. A disordered region spans residues 71–99; that stretch reads DGFGRINDSGPKRRGRDQSQYSSRFVELD.

The protein localises to the cytoplasm. This is an uncharacterized protein from Saccharomyces cerevisiae (strain ATCC 204508 / S288c) (Baker's yeast).